The primary structure comprises 101 residues: Small ribosomal subunit protein uS14 (101 aa).

Belongs to the universal ribosomal protein uS14 family. As to quaternary structure, part of the 30S ribosomal subunit. Contacts proteins S3 and S10.

In terms of biological role, binds 16S rRNA, required for the assembly of 30S particles and may also be responsible for determining the conformation of the 16S rRNA at the A site. The chain is Small ribosomal subunit protein uS14 from Ruthia magnifica subsp. Calyptogena magnifica.